A 493-amino-acid chain; its full sequence is Proline--tRNA ligase (493 aa).

Belongs to the class-II aminoacyl-tRNA synthetase family. ProS type 3 subfamily. In terms of assembly, homodimer.

The protein resides in the cytoplasm. The catalysed reaction is tRNA(Pro) + L-proline + ATP = L-prolyl-tRNA(Pro) + AMP + diphosphate. Catalyzes the attachment of proline to tRNA(Pro) in a two-step reaction: proline is first activated by ATP to form Pro-AMP and then transferred to the acceptor end of tRNA(Pro). The sequence is that of Proline--tRNA ligase from Parabacteroides distasonis (strain ATCC 8503 / DSM 20701 / CIP 104284 / JCM 5825 / NCTC 11152).